The chain runs to 345 residues: Heat stress transcription factor A-2 (345 aa).

A compositionally biased stretch (low complexity) spans 17–30; that stretch reads GSVAASSSVGSSSS. A disordered region spans residues 17-40; sequence GSVAASSSVGSSSSPRPMEGLNET. A DNA-binding region spans residues 42–136; the sequence is PPPFLTKTYE…LLKNIKRRRN (95 aa). The segment at 150-216 is hydrophobic repeat HR-A/B; it reads SCVEVGQYGF…QMMTFLAKAL (67 aa). The Nuclear localization signal motif lies at 231 to 238; the sequence is EKKSLFGL. An AHA1 motif is present at residues 273 to 282; the sequence is EMLFAAAIDD. A Glycyl lysine isopeptide (Lys-Gly) (interchain with G-Cter in SUMO) cross-link involves residue K315. The AHA2 motif lies at 324–333; the sequence is LDWDSQDLHD. The Nuclear export signal motif lies at 334–341; that stretch reads MVDQMGFL.

It belongs to the HSF family. Class A subfamily. Homotrimer. Interacts with SUMO1. Binds to HSBP. Exhibits temperature-dependent phosphorylation. Post-translationally, sumoylated at Lys-315. Sumoylation represses its function.

The protein localises to the cytoplasm. Its subcellular location is the nucleus. Its function is as follows. Transcriptional activator that specifically binds DNA sequence 5'-AGAAnnTTCT-3' known as heat shock promoter elements (HSE). Seems to be involved in other environmental stress responses. Activates ascorbate peroxidase 2 (APX2) in addition to several heat shock protein (HSPs). Binds to the promoter of SGIP1 and activates its expression in heat acclimated plants. Involved in the mechanisms necessary for quick response to heat and subsequent heritable transgenerational memory of heat acclimation (global warming) such as early flowering and attenuated immunity; this process includes epigenetic regulation as well as post-transcriptional gene silencing (PTGS). In response to heat, HSFA2 is activated and promotes the expression of REF6 which in turn derepresses HSFA2, thus establishing an inheritable feedback loop able to trigger SGIP1 and subsequent SGIP1-mediated SGS3 degradation; this prevents the biosynthesis of trans-acting siRNA (tasiRNA) and leads to the release of HTT5, which drives early flowering but attenuates immunity. The sequence is that of Heat stress transcription factor A-2 from Arabidopsis thaliana (Mouse-ear cress).